Here is a 384-residue protein sequence, read N- to C-terminus: Probable tRNA sulfurtransferase (384 aa).

The region spanning 57 to 160 (EEVVDRVRNV…KKTYIYSKRI (104 aa)) is the THUMP domain. Residues 177-178 (ML), 202-203 (YF), R259, G281, and Q290 each bind ATP.

It belongs to the ThiI family.

The protein localises to the cytoplasm. It catalyses the reaction [ThiI sulfur-carrier protein]-S-sulfanyl-L-cysteine + a uridine in tRNA + 2 reduced [2Fe-2S]-[ferredoxin] + ATP + H(+) = [ThiI sulfur-carrier protein]-L-cysteine + a 4-thiouridine in tRNA + 2 oxidized [2Fe-2S]-[ferredoxin] + AMP + diphosphate. It carries out the reaction [ThiS sulfur-carrier protein]-C-terminal Gly-Gly-AMP + S-sulfanyl-L-cysteinyl-[cysteine desulfurase] + AH2 = [ThiS sulfur-carrier protein]-C-terminal-Gly-aminoethanethioate + L-cysteinyl-[cysteine desulfurase] + A + AMP + 2 H(+). The protein operates within cofactor biosynthesis; thiamine diphosphate biosynthesis. Catalyzes the ATP-dependent transfer of a sulfur to tRNA to produce 4-thiouridine in position 8 of tRNAs, which functions as a near-UV photosensor. Also catalyzes the transfer of sulfur to the sulfur carrier protein ThiS, forming ThiS-thiocarboxylate. This is a step in the synthesis of thiazole, in the thiamine biosynthesis pathway. The sulfur is donated as persulfide by IscS. The protein is Probable tRNA sulfurtransferase of Clostridium acetobutylicum (strain ATCC 824 / DSM 792 / JCM 1419 / IAM 19013 / LMG 5710 / NBRC 13948 / NRRL B-527 / VKM B-1787 / 2291 / W).